The following is a 241-amino-acid chain: Cell division cycle-associated protein 4 (241 aa).

One can recognise an SERTA domain in the interval tyrosine 30 to glycine 77.

In terms of tissue distribution, highest levels of expression in the pancreas, thymus, testis, spleen, liver, placenta and leukocytes. Relatively low levels in the lung, kidney, prostate, ovary, small intestine and colon. Hardly detectable, if at all, in the brain, skeletal muscle and heart.

It is found in the nucleus. May participate in the regulation of cell proliferation through the E2F/RB pathway. May be involved in molecular regulation of hematopoietic stem cells and progenitor cell lineage commitment and differentiation. The chain is Cell division cycle-associated protein 4 (CDCA4) from Homo sapiens (Human).